The primary structure comprises 357 residues: Sulfate/thiosulfate import ATP-binding protein CysA (357 aa).

The region spanning Ile3 to Leu237 is the ABC transporter domain. Gly35–Thr42 is a binding site for ATP.

This sequence belongs to the ABC transporter superfamily. Sulfate/tungstate importer (TC 3.A.1.6) family. As to quaternary structure, the complex is composed of two ATP-binding proteins (CysA), two transmembrane proteins (CysT and CysW) and a solute-binding protein (CysP).

The protein resides in the cell inner membrane. It carries out the reaction sulfate(out) + ATP + H2O = sulfate(in) + ADP + phosphate + H(+). It catalyses the reaction thiosulfate(out) + ATP + H2O = thiosulfate(in) + ADP + phosphate + H(+). Functionally, part of the ABC transporter complex CysAWTP involved in sulfate/thiosulfate import. Responsible for energy coupling to the transport system. This is Sulfate/thiosulfate import ATP-binding protein CysA from Neisseria meningitidis serogroup A / serotype 4A (strain DSM 15465 / Z2491).